We begin with the raw amino-acid sequence, 471 residues long: Phosphatidylserine synthase 2 (471 aa).

The tract at residues 1–26 (MRRGERRVAGGSGSESPLLEGRRSTE) is disordered. The Cytoplasmic portion of the chain corresponds to 1–40 (MRRGERRVAGGSGSESPLLEGRRSTESEVYDDGTNTFFWR). Phosphoserine is present on residues serine 12, serine 14, and serine 16. Residues 41–61 (AHTLTVLFILTCALGYVTLLE) form a helical membrane-spanning segment. Over 62-74 (ETPQDTAYNTKRG) the chain is Lumenal. The chain crosses the membrane as a helical span at residues 75 to 95 (IVASILVFLCFGVTQAKDGPF). The Cytoplasmic segment spans residues 96-104 (SRPHPAYWR). A helical transmembrane segment spans residues 105-125 (FWLCVSVVYELFLIFILFQTV). Residues 126 to 291 (HDGRQFLKYV…EWKPASSLHR (166 aa)) lie on the Lumenal side of the membrane. N-linked (GlcNAc...) asparagine glycosylation occurs at asparagine 159. The chain crosses the membrane as a helical span at residues 292–312 (WLAVCGIILVFLLAELNTFYL). Lysine 313 is a topological domain (cytoplasmic). The helical transmembrane segment at 314 to 334 (FVLWMPPEHYLVLLRLVFFVN) threads the bilayer. Over 335-354 (VGGVAMREIYDFMDELKPHR) the chain is Lumenal. Residues 355 to 375 (KLGQQAWLVAAITVTELLIVV) traverse the membrane as a helical segment. At 376 to 381 (KYDPHT) the chain is on the cytoplasmic side. The helical transmembrane segment at 382–402 (LTLSLPFYISQCWTLGSILVL) threads the bilayer. At 403 to 471 (TWTVWRFFLR…PAEEGPSAAS (69 aa)) the chain is on the lumenal side. Positions 423-471 (RQKQQSHQAINNGDGHPGPEDDLPGTGTAEEEGTTNDGVPAEEGPSAAS) are disordered.

It belongs to the phosphatidyl serine synthase family.

The protein resides in the endoplasmic reticulum membrane. It carries out the reaction a 1,2-diacyl-sn-glycero-3-phosphoethanolamine + L-serine = a 1,2-diacyl-sn-glycero-3-phospho-L-serine + ethanolamine. The enzyme catalyses 1-hexadecanoyl-2-(9Z-octadecenoyl)-sn-glycero-3-phosphoethanolamine + L-serine = 1-hexadecanoyl-2-(9Z-octadecenoyl)-sn-glycero-3-phospho-L-serine + ethanolamine. It catalyses the reaction 1-hexadecanoyl-2-(4Z,7Z,10Z,13Z,16Z,19Z-docosahexaenoyl)-sn-glycero-3-phosphoethanolamine + L-serine = 1-hexadecanoyl-2-(4Z,7Z,10Z,13Z,16Z,19Z-docosahexaenoyl)-sn-glycero-3-phosphoserine + ethanolamine. The catalysed reaction is 1-octadecanoyl-2-(5Z,8Z,11Z,14Z)-eicosatetraenoyl-sn-glycero-3-phosphoethanolamine + L-serine = 1-octadecanoyl-2-(5Z,8Z,11Z,14Z)-eicosatetraenoyl-sn-glycero-3-phosphoserine + ethanolamine. It carries out the reaction 1-octadecanoyl-2-(4Z,7Z,10Z,13Z,16Z,19Z-docosahexaenoyl)-sn-glycero-3-phosphoethanolamine + L-serine = 1-octadecanoyl-2-(4Z,7Z,10Z,13Z,16Z,19Z-docosahexaenoyl)-sn-glycero-3-phosphoserine + ethanolamine. The enzyme catalyses 1-(1Z-octadecenyl)-2-(4Z,7Z,10Z,13Z,16Z,19Z-docosahexaenoyl)-sn-glycero-3-phosphoethanolamine + L-serine = 1-(1Z-octadecenyl)-2-(4Z,7Z,10Z,13Z,16Z,19Z-docosahexaenoyl)-sn-glycero-3-phospho-L-serine + ethanolamine. It catalyses the reaction 1-octadecanoyl-2-(9Z-octadecenoyl)-sn-glycero-3-phosphoethanolamine + L-serine = 1-octadecanoyl-2-(9Z-octadecenoyl)-sn-glycero-3-phospho-L-serine + ethanolamine. The catalysed reaction is 1-(1Z-octadecenyl)-2-(9Z-octadecenoyl)-sn-glycero-3-phosphoethanolamine + L-serine = 1-(1Z-octadecenyl)-2-(9Z-octadecenoyl)-sn-glycero-3-phospho-L-serine + ethanolamine. It carries out the reaction 1-(1Z-octadecenyl)-2-(5Z,8Z,11Z,14Z- eicosatetraenoyl)-sn-glycero-3-phosphoethanolamine + L-serine = 1-(1Z-octadecenyl)-2-(5Z,8Z,11Z,14Z-eicosatetraenoyl)-sn-glycero-3-phospho-L-serine + ethanolamine. It functions in the pathway phospholipid metabolism; phosphatidylserine biosynthesis. Functionally, catalyzes a base-exchange reaction in which the polar head group of phosphatidylethanolamine (PE) or phosphatidylcholine (PC) is replaced by L-serine. Catalyzes the conversion of phosphatatidylethanolamine and does not act on phosphatidylcholine. Can utilize both phosphatidylethanolamine (PE) plasmalogen and diacyl PE as substrate and the latter is six times better utilized, indicating the importance of an ester linkage at the sn-1 position. Although it shows no sn-1 fatty acyl preference, exhibits significant preference towards docosahexaenoic acid (22:6n-3) compared with 18:1 or 20:4 at the sn-2 position. This Rattus norvegicus (Rat) protein is Phosphatidylserine synthase 2 (Ptdss2).